Here is a 329-residue protein sequence, read N- to C-terminus: Prostaglandin reductase 1 (329 aa).

At T18 the chain carries Phosphothreonine. S20 carries the phosphoserine modification. NADP(+) is bound by residues 152–155 (GAVG), K178, Y193, N217, 239–245 (CGAISTY), 270–272 (FVV), and N321. An N6-(2-hydroxyisobutyryl)lysine; alternate modification is found at K178. K178 is subject to N6-acetyllysine; alternate.

It belongs to the NADP-dependent oxidoreductase L4BD family. In terms of assembly, monomer or homodimer. As to expression, high expression in the kidney, liver, and intestine but not in leukocytes.

The protein resides in the cytoplasm. It catalyses the reaction 13,14-dihydro-15-oxo-prostaglandin E1 + NADP(+) = 15-oxoprostaglandin E1 + NADPH + H(+). It carries out the reaction 13,14-dihydro-15-oxo-prostaglandin E2 + NADP(+) = 15-oxoprostaglandin E2 + NADPH + H(+). The enzyme catalyses 13,14-dihydro-15-oxo-prostaglandin F1alpha + NADP(+) = 15-oxoprostaglandin F1alpha + NADPH + H(+). The catalysed reaction is 13,14-dihydro-15-oxo-PGF2alpha + NADP(+) = 15-oxoprostaglandin F2alpha + NADPH + H(+). It catalyses the reaction leukotriene B4 + NADP(+) = 12-oxo-leukotriene B4 + NADPH + H(+). It carries out the reaction 20-hydroxy-leukotriene B4 + NADP(+) = 12-oxo-20-hydroxy-leukotriene B4 + NADPH + H(+). The enzyme catalyses 6-trans-leukotriene B4 + NADP(+) = 12-oxo-(5S)-hydroxy-(6E,8E,10E,14Z)-eicosatetraenoate + NADPH + H(+). The catalysed reaction is (5S,12S)-dihydroxy-(6E,10E,12E,14Z)-eicosatetraenoate + NADP(+) = 12-oxo-(5S)-hydroxy-(6E,8E,10E,14Z)-eicosatetraenoate + NADPH + H(+). It catalyses the reaction an n-alkanal + NADP(+) = an alk-2-enal + NADPH + H(+). It carries out the reaction hexanal + NADP(+) = (E)-hex-2-enal + NADPH + H(+). The enzyme catalyses octanal + NADP(+) = (2E)-octenal + NADPH + H(+). The catalysed reaction is decanal + NADP(+) = (2E)-decenal + NADPH + H(+). It catalyses the reaction dodecanal + NADP(+) = (2E)-dodecenal + NADPH + H(+). It carries out the reaction 4-hydroxynonanal + NADP(+) = (E)-4-hydroxynon-2-enal + NADPH + H(+). The enzyme catalyses pentan-2-one + NADP(+) = (E)-pent-3-en-2-one + NADPH + H(+). The catalysed reaction is nonan-2-one + NADP(+) = (3E)-nonen-2-one + NADPH + H(+). Its function is as follows. NAD(P)H-dependent oxidoreductase involved in metabolic inactivation of pro- and anti-inflammatory eicosanoids: prostaglandins (PG), leukotrienes (LT) and lipoxins (LX). Catalyzes with high efficiency the reduction of the 13,14 double bond of 15-oxoPGs, including 15-oxo-PGE1, 15-oxo-PGE2, 15-oxo-PGF1-alpha and 15-oxo-PGF2-alpha. Catalyzes with lower efficiency the oxidation of the hydroxyl group at C12 of LTB4 and its derivatives, converting them into biologically less active 12-oxo-LTB4 metabolites. Reduces 15-oxo-LXA4 to 13,14 dihydro-15-oxo-LXA4, enhancing neutrophil recruitment at the inflammatory site. May play a role in metabolic detoxification of alkenals and ketones. Reduces alpha,beta-unsaturated alkenals and ketones, particularly those with medium-chain length, showing highest affinity toward (2E)-decenal and (3E)-3-nonen-2-one. May inactivate 4-hydroxy-2-nonenal, a cytotoxic lipid constituent of oxidized low-density lipoprotein particles. This is Prostaglandin reductase 1 (PTGR1) from Homo sapiens (Human).